The chain runs to 334 residues: tRNA U34 carboxymethyltransferase (334 aa).

Residues Lys91, Trp105, Lys110, Gly130, Asp152–Thr154, Ile181–Glu182, Met196, Tyr200, and Arg315 contribute to the carboxy-S-adenosyl-L-methionine site.

The protein belongs to the class I-like SAM-binding methyltransferase superfamily. CmoB family. As to quaternary structure, homotetramer.

It carries out the reaction carboxy-S-adenosyl-L-methionine + 5-hydroxyuridine(34) in tRNA = 5-carboxymethoxyuridine(34) in tRNA + S-adenosyl-L-homocysteine + H(+). Catalyzes carboxymethyl transfer from carboxy-S-adenosyl-L-methionine (Cx-SAM) to 5-hydroxyuridine (ho5U) to form 5-carboxymethoxyuridine (cmo5U) at position 34 in tRNAs. This chain is tRNA U34 carboxymethyltransferase, found in Klebsiella pneumoniae (strain 342).